Consider the following 158-residue polypeptide: Urease accessory protein UreE (158 aa).

This sequence belongs to the UreE family.

It localises to the cytoplasm. Involved in urease metallocenter assembly. Binds nickel. Probably functions as a nickel donor during metallocenter assembly. The protein is Urease accessory protein UreE of Corynebacterium urealyticum (strain ATCC 43042 / DSM 7109).